We begin with the raw amino-acid sequence, 188 residues long: RWD domain-containing protein 4 (188 aa).

The RWD domain occupies 9 to 111 (MELEALRSIY…EYAKDHKEQF (103 aa)). The interval 132–167 (TPTTAPSSKKKEKKEQLSKAQKRKLADKTDHKGELP) is disordered. The segment covering 155–166 (KLADKTDHKGEL) has biased composition (basic and acidic residues).

This Mus musculus (Mouse) protein is RWD domain-containing protein 4 (Rwdd4).